We begin with the raw amino-acid sequence, 200 residues long: Recombination protein RecR (200 aa).

The C4-type zinc-finger motif lies at 58–75; it reads CPLCFTLKESKEADCHFC. Positions 82 to 177 constitute a Toprim domain; it reads QSLCIVASPK…NISRLALGLP (96 aa).

Belongs to the RecR family.

In terms of biological role, may play a role in DNA repair. It seems to be involved in an RecBC-independent recombinational process of DNA repair. It may act with RecF and RecO. In Chlamydia pneumoniae (Chlamydophila pneumoniae), this protein is Recombination protein RecR.